The following is a 336-amino-acid chain: Holliday junction branch migration complex subunit RuvB (336 aa).

Residues 4-184 (ADRLISATGV…FGIVQRLEFY (181 aa)) are large ATPase domain (RuvB-L). Residues isoleucine 23, arginine 24, glycine 65, lysine 68, threonine 69, threonine 70, 131–133 (EDY), arginine 174, tyrosine 184, and arginine 221 contribute to the ATP site. Residue threonine 69 participates in Mg(2+) binding. The small ATPAse domain (RuvB-S) stretch occupies residues 185–255 (NVKDLTDIVS…IAARAMDMLD (71 aa)). The tract at residues 258-336 (NEGFDFMDRK…HFGLQRPDER (79 aa)) is head domain (RuvB-H). Positions 313 and 318 each coordinate DNA.

This sequence belongs to the RuvB family. In terms of assembly, homohexamer. Forms an RuvA(8)-RuvB(12)-Holliday junction (HJ) complex. HJ DNA is sandwiched between 2 RuvA tetramers; dsDNA enters through RuvA and exits via RuvB. An RuvB hexamer assembles on each DNA strand where it exits the tetramer. Each RuvB hexamer is contacted by two RuvA subunits (via domain III) on 2 adjacent RuvB subunits; this complex drives branch migration. In the full resolvosome a probable DNA-RuvA(4)-RuvB(12)-RuvC(2) complex forms which resolves the HJ.

It is found in the cytoplasm. It catalyses the reaction ATP + H2O = ADP + phosphate + H(+). Functionally, the RuvA-RuvB-RuvC complex processes Holliday junction (HJ) DNA during genetic recombination and DNA repair, while the RuvA-RuvB complex plays an important role in the rescue of blocked DNA replication forks via replication fork reversal (RFR). RuvA specifically binds to HJ cruciform DNA, conferring on it an open structure. The RuvB hexamer acts as an ATP-dependent pump, pulling dsDNA into and through the RuvAB complex. RuvB forms 2 homohexamers on either side of HJ DNA bound by 1 or 2 RuvA tetramers; 4 subunits per hexamer contact DNA at a time. Coordinated motions by a converter formed by DNA-disengaged RuvB subunits stimulates ATP hydrolysis and nucleotide exchange. Immobilization of the converter enables RuvB to convert the ATP-contained energy into a lever motion, pulling 2 nucleotides of DNA out of the RuvA tetramer per ATP hydrolyzed, thus driving DNA branch migration. The RuvB motors rotate together with the DNA substrate, which together with the progressing nucleotide cycle form the mechanistic basis for DNA recombination by continuous HJ branch migration. Branch migration allows RuvC to scan DNA until it finds its consensus sequence, where it cleaves and resolves cruciform DNA. This Aeromonas salmonicida (strain A449) protein is Holliday junction branch migration complex subunit RuvB.